Here is a 173-residue protein sequence, read N- to C-terminus: 5-hydroxymethyl-dUMP N-hydrolase (173 aa).

The residue at position 2 (Ala-2) is an N-acetylalanine. 5-hydroxymethyl-dUMP is bound at residue Gly-16. Ser-17 carries the phosphoserine modification. 6 residues coordinate 5-hydroxymethyl-dUMP: Ile-18, Arg-19, Gly-20, Ser-87, Gly-89, and Glu-93. Ser-87 carries the post-translational modification Phosphoserine. Phosphoserine occurs at positions 112, 117, 127, and 158. Ser-117 lines the 5-hydroxymethyl-dUMP pocket.

This sequence belongs to the 2'-deoxynucleoside 5'-phosphate N-hydrolase 1 family. As to quaternary structure, monomer and homodimer.

It localises to the cytoplasm. It is found in the nucleus. It carries out the reaction 5-hydroxymethyl-dUMP + H2O = 5-hydroxymethyluracil + 2-deoxy-D-ribose 5-phosphate. In terms of biological role, part of a nucleotide salvage pathway that eliminates epigenetically modified 5-hydroxymethyl-dCMP (hmdCMP) in a two-step process entailing deamination to cytotoxic 5-hydroxymethyl-dUMP (hmdUMP), followed by its hydrolysis into 5-hydroxymethyluracil (hmU) and 2-deoxy-D-ribose 5-phosphate (deoxyribosephosphate). Catalyzes the second step in that pathway, the hydrolysis of the N-glycosidic bond in hmdUMP, degrading this cytotoxic nucleotide to avoid its genomic integration. The chain is 5-hydroxymethyl-dUMP N-hydrolase from Mus musculus (Mouse).